The chain runs to 354 residues: UDP-glucose 4-epimerase 1 (354 aa).

8-39 provides a ligand contact to NAD(+); it reads TILVTGGAGYIGSHTVLQLLQLGFRVVVLDNL. Substrate is bound at residue Ser-133. Catalysis depends on Tyr-157, which acts as the Proton acceptor.

This sequence belongs to the NAD(P)-dependent epimerase/dehydratase family. The cofactor is NAD(+).

It catalyses the reaction UDP-alpha-D-glucose = UDP-alpha-D-galactose. It functions in the pathway carbohydrate metabolism; galactose metabolism. Catalyzes the interconversion between UDP-glucose and UDP-galactose. The chain is UDP-glucose 4-epimerase 1 (UGE-1) from Oryza sativa subsp. japonica (Rice).